The following is a 623-amino-acid chain: Trehalase (623 aa).

The protein belongs to the glycosyl hydrolase 15 family. As to quaternary structure, monomer.

The catalysed reaction is alpha,alpha-trehalose + H2O = alpha-D-glucose + beta-D-glucose. It participates in glycan degradation; trehalose degradation; D-glucose from alpha,alpha-trehalose: step 1/1. Inhibited by validamycin A. Its function is as follows. Catalyzes the hydrolysis of alpha,alpha-trehalose into two molecules of D-glucose. This chain is Trehalase, found in Thermoplasma volcanium (strain ATCC 51530 / DSM 4299 / JCM 9571 / NBRC 15438 / GSS1).